We begin with the raw amino-acid sequence, 631 residues long: Glycosyltransferase-like protein LARGE (631 aa).

Topologically, residues 1–6 are cytoplasmic; it reads MQSNYS. The helical; Signal-anchor for type II membrane protein transmembrane segment at 7–27 threads the bilayer; sequence ISYFLLILFTGTSSYFTIWNF. Topologically, residues 28–631 are lumenal; the sequence is VDHTRVGAFP…TASRLGIKLR (604 aa). Residues N95, N105, N167, N177, N287, N400, N485, N502, N521, N529, and N593 are each glycosylated (N-linked (GlcNAc...) asparagine).

This sequence belongs to the glycosyltransferase 8 family.

The protein resides in the golgi apparatus membrane. Its function is as follows. Probable glycosyltransferase. This Caenorhabditis elegans protein is Glycosyltransferase-like protein LARGE (lge-1).